The chain runs to 295 residues: Cyclin-G1 (295 aa).

The protein belongs to the cyclin family. Cyclin G subfamily.

It localises to the nucleus. Its function is as follows. May play a role in growth regulation. Is associated with G2/M phase arrest in response to DNA damage. May be an intermediate by which p53 mediates its role as an inhibitor of cellular proliferation. This Pongo abelii (Sumatran orangutan) protein is Cyclin-G1 (CCNG1).